The primary structure comprises 1225 residues: Clustered mitochondria protein homolog (1225 aa).

The interval 1–22 (MAQTNGEMEHSKESPEQITNGN) is disordered. The region spanning 281-532 (QESNNQKDLL…RVTPLDVAWN (252 aa)) is the Clu domain. Disordered regions lie at residues 577–605 (EEAAKKEKSSEDTESKEEGSEEKSEEALD) and 846–878 (ANGVNGTGQDEGSKKKKKNKNGDSGSPARSAAA). TPR repeat units follow at residues 949-982 (AKLYHQLSMLYYQTDEKDAAVELARKAVIVTERT), 991-1024 (ILSYLNLSLFEHASGNTKVALAYIKHAMDLWKII), and 1033-1066 (ITTMNNAAVMLQHLKQYSDSRKWFEASLSVCESL). Polar residues predominate over residues 1153–1184 (RTTLGTQIQPQVGQSTADVSAPSQASNSSIDS). Positions 1153–1225 (RTTLGTQIQP…KLRGSKKSSA (73 aa)) are disordered.

Belongs to the CLU family. May associate with the eukaryotic translation initiation factor 3 (eIF-3) complex.

The protein resides in the cytoplasm. In terms of biological role, mRNA-binding protein involved in proper cytoplasmic distribution of mitochondria. The protein is Clustered mitochondria protein homolog of Emericella nidulans (strain FGSC A4 / ATCC 38163 / CBS 112.46 / NRRL 194 / M139) (Aspergillus nidulans).